Consider the following 493-residue polypeptide: 6-phosphogluconate dehydrogenase, decarboxylating (493 aa).

Residues 12-17 (GLAVMG), 35-37 (NRT), 77-79 (VKA), and N105 each bind NADP(+). Substrate contacts are provided by residues N105 and 131-133 (SGG). K187 serves as the catalytic Proton acceptor. 190 to 191 (HN) provides a ligand contact to substrate. The active-site Proton donor is the E194. Substrate is bound by residues Y195, K266, R293, R456, and H462.

It belongs to the 6-phosphogluconate dehydrogenase family. As to quaternary structure, homodimer.

It catalyses the reaction 6-phospho-D-gluconate + NADP(+) = D-ribulose 5-phosphate + CO2 + NADPH. Its pathway is carbohydrate degradation; pentose phosphate pathway; D-ribulose 5-phosphate from D-glucose 6-phosphate (oxidative stage): step 3/3. In terms of biological role, catalyzes the oxidative decarboxylation of 6-phosphogluconate to ribulose 5-phosphate and CO(2), with concomitant reduction of NADP to NADPH. The chain is 6-phosphogluconate dehydrogenase, decarboxylating (gnd) from Dictyostelium discoideum (Social amoeba).